A 440-amino-acid polypeptide reads, in one-letter code: Inner membrane metabolite transport protein YhjE (440 aa).

Topologically, residues M1–E34 are cytoplasmic. A helical transmembrane segment spans residues F35 to P55. The Periplasmic portion of the chain corresponds to Q56–S66. The chain crosses the membrane as a helical span at residues L67–F87. Topologically, residues G88 to T108 are cytoplasmic. The next 2 membrane-spanning stretches (helical) occupy residues V109–A129 and L130–A150. Residues T151–Q167 are Cytoplasmic-facing. Residues L168–L188 form a helical membrane-spanning segment. At T189–Q192 the chain is on the periplasmic side. Residues F193 to L213 traverse the membrane as a helical segment. At Y214–R248 the chain is on the cytoplasmic side. A helical membrane pass occupies residues V249 to V269. Residues Y270–E289 lie on the Periplasmic side of the membrane. Residues V290 to L310 form a helical membrane-spanning segment. Over L311 to S320 the chain is Cytoplasmic. A helical membrane pass occupies residues M321–G341. At S342–P345 the chain is on the periplasmic side. Residues I346 to M366 form a helical membrane-spanning segment. Residues G367–S384 are Cytoplasmic-facing. A helical membrane pass occupies residues F385–L405. Over Q406–G410 the chain is Periplasmic. The chain crosses the membrane as a helical span at residues L411–L431. The Cytoplasmic portion of the chain corresponds to T432–L440.

The protein belongs to the major facilitator superfamily. Metabolite:H+ Symporter (MHS) family (TC 2.A.1.6) family.

It localises to the cell inner membrane. The polypeptide is Inner membrane metabolite transport protein YhjE (yhjE) (Escherichia coli (strain K12)).